Consider the following 600-residue polypeptide: Brain-enriched guanylate kinase-associated protein (600 aa).

Met-1 carries the post-translational modification N-acetylmethionine. A Phosphotyrosine modification is found at Tyr-137. The tract at residues 192–222 is disordered; it reads PGSLSSRMSDASARDLGYRDGVEKSGPRPPY. A Phosphoserine modification is found at Ser-200. The segment covering 203–217 has biased composition (basic and acidic residues); sequence SARDLGYRDGVEKSG. Phosphoserine occurs at positions 229 and 246. Thr-249 is modified (phosphothreonine). The residue at position 265 (Ser-265) is a Phosphoserine. A disordered region spans residues 298-317; sequence SSYSSFSATSEEKEHAQAGT. Ser-372 carries the post-translational modification Phosphoserine. Asymmetric dimethylarginine is present on Arg-380. 7 positions are modified to phosphoserine: Ser-463, Ser-473, Ser-483, Ser-485, Ser-508, Ser-510, and Ser-514. The tract at residues 537–590 is disordered; sequence GAGSSPEPEHGSRESLEPSSMEASPEMHPPTRLSPQQAFPRTGGSGLSRKDSLT. Residues 543–552 show a composition bias toward basic and acidic residues; the sequence is EPEHGSRESL. 2 positions are modified to phosphoserine: Ser-560 and Ser-570.

As to quaternary structure, interacts with DLG4 and DLGAP1 and forms a ternary complex.

The protein localises to the cytoplasm. It is found in the membrane. May sustain the structure of the postsynaptic density (PSD). This is Brain-enriched guanylate kinase-associated protein (Begain) from Mus musculus (Mouse).